Consider the following 120-residue polypeptide: Glycine cleavage system H protein (120 aa).

The 83-residue stretch at 17 to 99 (VATVGITAHA…QGDGWLYRLK (83 aa)) folds into the Lipoyl-binding domain. Lys58 bears the N6-lipoyllysine mark.

This sequence belongs to the GcvH family. The glycine cleavage system is composed of four proteins: P, T, L and H. It depends on (R)-lipoate as a cofactor.

In terms of biological role, the glycine cleavage system catalyzes the degradation of glycine. The H protein shuttles the methylamine group of glycine from the P protein to the T protein. In Methylorubrum extorquens (strain PA1) (Methylobacterium extorquens), this protein is Glycine cleavage system H protein.